We begin with the raw amino-acid sequence, 98 residues long: snRNA-activating protein complex subunit 5 (98 aa).

The segment at 75–98 (ALELSTRSHVQEEEEEEEEEEEDS) is disordered. The segment covering 86 to 98 (EEEEEEEEEEEDS) has biased composition (acidic residues).

As to quaternary structure, part of the SNAPc complex composed of 5 subunits: SNAPC1, SNAPC2, SNAPC3, SNAPC4 and SNAPC5. SNAPC5 interacts with SNAPC4.

It localises to the nucleus. In terms of biological role, part of the SNAPc complex required for the transcription of both RNA polymerase II and III small-nuclear RNA genes. Binds to the proximal sequence element (PSE), a non-TATA-box basal promoter element common to these 2 types of genes. Recruits TBP and BRF2 to the U6 snRNA TATA box. This chain is snRNA-activating protein complex subunit 5 (SNAPC5), found in Bos taurus (Bovine).